Consider the following 310-residue polypeptide: Taste receptor type 2 member 125 (310 aa).

Topologically, residues Met1–Gly2 are extracellular. The chain crosses the membrane as a helical span at residues Ile3 to Ala23. At Asn24–Gln46 the chain is on the cytoplasmic side. A helical membrane pass occupies residues Ile47–Leu67. The Extracellular segment spans residues Ile68–Asn87. The helical transmembrane segment at Ile88–Phe108 threads the bilayer. At Leu109–Lys128 the chain is on the cytoplasmic side. A helical membrane pass occupies residues Val129 to Asn149. At Met150–Thr185 the chain is on the extracellular side. Asn162, Asn171, and Asn183 each carry an N-linked (GlcNAc...) asparagine glycan. A helical transmembrane segment spans residues Phe186–Trp206. Residues Arg207–Gln232 lie on the Cytoplasmic side of the membrane. The helical transmembrane segment at Met233 to Trp253 threads the bilayer. Residues Thr254–Asn261 lie on the Extracellular side of the membrane. The helical transmembrane segment at Asn262 to Leu282 threads the bilayer. Topologically, residues Arg283–Pro310 are cytoplasmic.

It belongs to the G-protein coupled receptor T2R family.

The protein resides in the membrane. Functionally, putative taste receptor which may play a role in the perception of bitterness. The protein is Taste receptor type 2 member 125 of Rattus norvegicus (Rat).